Here is a 2006-residue protein sequence, read N- to C-terminus: Sodium channel protein type 2 subunit alpha (2006 aa).

At S4 the chain carries Phosphoserine. The segment at 28–61 (RIAEEKAKRPKQERKDEDDENGPKPNSDLEAGKS) is disordered. K38 is covalently cross-linked (Glycyl lysine isopeptide (Lys-Gly) (interchain with G-Cter in SUMO1)). An I repeat occupies 111 to 456 (ILTPFNPIRK…QQMLEQLKKQ (346 aa)). A helical membrane pass occupies residues 130–148 (LFNVLIMCTILTNCVFMTM). The chain crosses the membrane as a helical span at residues 156-176 (KNVEYTFTGIYTFESLIKILA). Residues 191–208 (WNWLDFTVITFAYVTEFV) traverse the membrane as a helical segment. A helical membrane pass occupies residues 215–231 (ALRTFRVLRALKTISVI). A helical transmembrane segment spans residues 251 to 270 (VMILTVFCLSVFALIGLQLF). Cysteines 278 and 338 form a disulfide. 6 N-linked (GlcNAc...) asparagine glycosylation sites follow: N285, N291, N297, N303, N308, and N340. The segment at residues 370–394 (FSWAFLSLFRLMTQDFWENLYQLTL) is an intramembrane region (pore-forming). A helical transmembrane segment spans residues 402–422 (MIFFVLVIFLGSFYLINLILA). S468, S471, S484, S526, S528, S531, S553, S554, S558, S573, S576, S589, S610, S623, S687, S688, and S722 each carry phosphoserine. The segment at 494-529 (SSKSEKELKNRRKKKKQKEQAGEEEKEDAVRKSASE) is disordered. Residues 511–529 (KEQAGEEEKEDAVRKSASE) show a composition bias toward basic and acidic residues. The interval 589-635 (SENDFADDEHSTFEDNDSRRDSLFVPHRHGERRPSNVSQASRASRGI) is disordered. Residues 596–610 (DEHSTFEDNDSRRDS) are compositionally biased toward basic and acidic residues. Residues 742–1014 (CCKPWLKVKH…QIAVGRMQKG (273 aa)) form an II repeat. Residues 761-779 (FVDLAITICIVLNTLFMAM) form a helical membrane-spanning segment. The helical transmembrane segment at 791–810 (VLSVGNLVFTGIFTAEMFLK) threads the bilayer. The chain crosses the membrane as a helical span at residues 825–844 (NIFDGFIVSLSLMELGLANV). Residues 847–864 (LSVLRSFRLLRVFKLAKS) traverse the membrane as a helical segment. A helical transmembrane segment spans residues 881–899 (ALGNLTLVLAIIVFIFAVV). An intrachain disulfide couples C913 to C919. Residues 918–919 (DC) form a binds SCN2B region. The pore-forming intramembrane region spans 929–949 (FFHSFLIVFRVLCGEWIETMW). A disulfide bridge connects residues C951 and C960. A helical membrane pass occupies residues 963 to 983 (VFMMVMVIGNLVVLNLFLALL). The disordered stretch occupies residues 1121 to 1167 (EEFSSESDMEESKEKLNATSSSEGSTVDIGAPAEGEQPEAEPEESLE). The span at 1156 to 1167 (EQPEAEPEESLE) shows a compositional bias: acidic residues. An III repeat occupies 1191-1505 (KGKLWWNLRK…KKYYNAMKKL (315 aa)). Residues 1211-1228 (FETFIVFMILLSSGALAF) form a helical membrane-spanning segment. Residues 1242–1260 (MLEYADKVFTYIFILEMLL) form a helical membrane-spanning segment. Residues 1275-1293 (WCWLDFLIVDVSLVSLTAN) form a helical membrane-spanning segment. Residues 1302 to 1320 (AIKSLRTLRALRPLRALSR) traverse the membrane as a helical segment. The chain crosses the membrane as a helical span at residues 1338-1357 (IMNVLLVCLIFWLIFSIMGV). A disulfide bond links C1367 and C1387. Residues 1410 to 1431 (GLGYLSLLQVATFKGWMDIMYA) constitute an intramembrane region (pore-forming). Residues 1449–1470 (YMYLYFVIFIIFGSFFTLNLFI) traverse the membrane as a helical segment. The residue at position 1507 (S1507) is a Phosphoserine. The IV repeat unit spans residues 1514 to 1812 (IPRPANKFQG…WEKFDPDATQ (299 aa)). The chain crosses the membrane as a helical span at residues 1534-1551 (FDISIMILICLNMVTMMV). A helical membrane pass occupies residues 1563–1581 (ILYWINLVFIVLFTGECVL). Residues 1594-1611 (GWNIFDFVVVILSIVGMF) form a helical membrane-spanning segment. The chain crosses the membrane as a helical span at residues 1625–1641 (LFRVIRLARIGRILRLI). Residues 1661–1678 (LFNIGLLLFLVMFIYAIF) form a helical membrane-spanning segment. Residues 1701 to 1723 (FGNSMICLFQITTSAGWDGLLAP) constitute an intramembrane region (pore-forming). A disulfide bond links C1732 and C1747. A helical membrane pass occupies residues 1754 to 1776 (IFFFVSYIIISFLVVVNMYIAVI). Residues 1906–1935 (EEVSAIVIQRAYRRYLLKQKVKKVSSIYKK) enclose the IQ domain. Position 1931 is a phosphoserine (S1931). Residues 1934 to 1965 (KKDKGKEDEGTPIKEDIITDKLNENSTPEKTD) are compositionally biased toward basic and acidic residues. The tract at residues 1934-2006 (KKDKGKEDEG…KGKDIRESKK (73 aa)) is disordered. A phosphothreonine mark is found at T1944, T1964, and T1967. Phosphoserine is present on S1972. Over residues 1980–2006 (TKPEKEKFEKDKSEKEDKGKDIRESKK) the composition is skewed to basic and acidic residues.

It belongs to the sodium channel (TC 1.A.1.10) family. Nav1.2/SCN2A subfamily. In terms of assembly, heterooligomer of a large alpha subunit and a smaller beta subunit. Heterooligomer with SCN2B or SCN4B; disulfide-linked. Interacts with NEDD4L. Interacts with CALM. Interacts with TMEM233. In terms of processing, sumoylated at Lys-38. Sumoylation is induced by hypoxia, increases voltage-gated sodium current and mediates the early response to acute hypoxia in neurons. Sumoylated SCN2A is located at the cell membrane. As to expression, expressed in brain (at protein level). Detected in hippocampus, cortex and brain stem.

Its subcellular location is the cell membrane. The enzyme catalyses Na(+)(in) = Na(+)(out). Mediates the voltage-dependent sodium ion permeability of excitable membranes. Assuming opened or closed conformations in response to the voltage difference across the membrane, the protein forms a sodium-selective channel through which Na(+) ions may pass in accordance with their electrochemical gradient. Implicated in the regulation of hippocampal replay occurring within sharp wave ripples (SPW-R) important for memory. The sequence is that of Sodium channel protein type 2 subunit alpha from Mus musculus (Mouse).